The chain runs to 117 residues: Large ribosomal subunit protein uL18 (117 aa).

The protein belongs to the universal ribosomal protein uL18 family. In terms of assembly, part of the 50S ribosomal subunit; part of the 5S rRNA/L5/L18/L25 subcomplex. Contacts the 5S and 23S rRNAs.

Functionally, this is one of the proteins that bind and probably mediate the attachment of the 5S RNA into the large ribosomal subunit, where it forms part of the central protuberance. This is Large ribosomal subunit protein uL18 from Neisseria gonorrhoeae (strain ATCC 700825 / FA 1090).